The primary structure comprises 255 residues: ATP synthase subunit a 2 (255 aa).

The next 5 membrane-spanning stretches (helical) occupy residues Trp24–Leu44, Leu86–Leu106, Asp131–Phe151, Met205–Trp225, and Ala226–Val246.

This sequence belongs to the ATPase A chain family. As to quaternary structure, F-type ATPases have 2 components, CF(1) - the catalytic core - and CF(0) - the membrane proton channel. CF(1) has five subunits: alpha(3), beta(3), gamma(1), delta(1), epsilon(1). CF(0) has three main subunits: a(1), b(2) and c(9-12). The alpha and beta chains form an alternating ring which encloses part of the gamma chain. CF(1) is attached to CF(0) by a central stalk formed by the gamma and epsilon chains, while a peripheral stalk is formed by the delta and b chains.

The protein localises to the cell inner membrane. Its function is as follows. Key component of the proton channel; it plays a direct role in the translocation of protons across the membrane. This chain is ATP synthase subunit a 2, found in Vibrio campbellii (strain ATCC BAA-1116).